We begin with the raw amino-acid sequence, 98 residues long: NADH-ubiquinone oxidoreductase chain 4L (98 aa).

Transmembrane regions (helical) follow at residues 1-21, 29-49, and 61-81; these read MSLT…GLLM, SLLC…MAIL, and IILL…LVMV.

This sequence belongs to the complex I subunit 4L family. As to quaternary structure, core subunit of respiratory chain NADH dehydrogenase (Complex I) which is composed of 45 different subunits.

It is found in the mitochondrion inner membrane. It catalyses the reaction a ubiquinone + NADH + 5 H(+)(in) = a ubiquinol + NAD(+) + 4 H(+)(out). Functionally, core subunit of the mitochondrial membrane respiratory chain NADH dehydrogenase (Complex I) which catalyzes electron transfer from NADH through the respiratory chain, using ubiquinone as an electron acceptor. Part of the enzyme membrane arm which is embedded in the lipid bilayer and involved in proton translocation. The polypeptide is NADH-ubiquinone oxidoreductase chain 4L (MT-ND4L) (Vampyressa melissa (Melissa's yellow-eared bat)).